Here is a 231-residue protein sequence, read N- to C-terminus: Homeobox protein EMX1 (231 aa).

The segment at residues 133 to 192 (PKRIRTAFSPSQLLRLERAFEKNHYVVGAERKQLANSLSLSETQVKVWFQNRRTKYKRQK) is a DNA-binding region (homeobox). The interval 193-231 (LEEEGPECTQKKKGNHHINRWRIATKQTGSEDIDVMSDA) is disordered. A compositionally biased stretch (basic residues) spans 203-212 (KKKGNHHINR).

Belongs to the EMX homeobox family.

The protein resides in the nucleus. Functionally, may function in combinations with OTX1/2 to specify cell fates in the developing central nervous system. This chain is Homeobox protein EMX1 (emx1), found in Danio rerio (Zebrafish).